The chain runs to 562 residues: Arginine--tRNA ligase 1 (562 aa).

The 'HIGH' region signature appears at 122-132 (PNIAKPFSMGH).

It belongs to the class-I aminoacyl-tRNA synthetase family. As to quaternary structure, monomer.

Its subcellular location is the cytoplasm. It carries out the reaction tRNA(Arg) + L-arginine + ATP = L-arginyl-tRNA(Arg) + AMP + diphosphate. This is Arginine--tRNA ligase 1 from Bacillus thuringiensis subsp. konkukian (strain 97-27).